The sequence spans 271 residues: Short-chain dehydrogenase/reductase SAT3 (271 aa).

The NADP(+) site is built by Ser17, Asp40, and Asn67. Residue Ser153 is the Proton donor of the active site. Residues Tyr168, Lys172, and Ser203 each contribute to the NADP(+) site. The active-site Proton acceptor is the Tyr168. Catalysis depends on Lys172, which acts as the Lowers pKa of active site Tyr.

This sequence belongs to the short-chain dehydrogenases/reductases (SDR) family.

It participates in mycotoxin biosynthesis. Its function is as follows. Short-chain dehydrogenase/reductase; part of the satratoxin SC1 cluster involved in the biosynthesis of satratoxins, trichothecene mycotoxins that are associated with human food poisonings. Satratoxins are suggested to be made by products of multiple gene clusters (SC1, SC2 and SC3) that encode 21 proteins in all, including polyketide synthases, acetyltransferases, and other enzymes expected to modify the trichothecene skeleton. SC1 encodes 10 proteins, SAT1 to SAT10. The largest are SAT8, which encodes a putative polyketide synthase (PKS) with a conventional non-reducing architecture, and SAT10, a putative protein containing four ankyrin repeats and thus may be involved in protein scaffolding. The putative short-chain reductase SAT3 may assist the PKS in some capacity. SAT6 contains a secretory lipase domain and acts probably as a trichothecene esterase. SAT5 encodes a putative acetyltransferase, and so, with SAT6, may affect endogenous protection from toxicity. The probable transcription factor SAT9 may regulate the expression of the SC1 cluster. SC2 encodes proteins SAT11 to SAT16, the largest of which encodes the putative reducing PKS SAT13. SAT11 is a cytochrome P450 monooxygenase, while SAT14 and SAT16 are probable acetyltransferases. The SC2 cluster may be regulated by the transcription factor SAT15. SC3 is a small cluster that encodes 5 proteins, SAT17 to SAT21. SAT21 is a putative MFS-type transporter which may have a role in exporting secondary metabolites. The four other proteins putatively encoded in SC3 include the taurine hydroxylase-like protein SAT17, the O-methyltransferase SAT18, the acetyltransferase SAT19, and the Cys6-type zinc finger SAT20, the latter being probably involved in regulation of SC3 expression. The chain is Short-chain dehydrogenase/reductase SAT3 from Stachybotrys chartarum (strain CBS 109288 / IBT 7711) (Toxic black mold).